Consider the following 295-residue polypeptide: Thioredoxin-related transmembrane protein 2 (295 aa).

The N-terminal stretch at 1-48 (MAVLAPLIALVYSVPRLSRWLARPYCLLSALLSIAFLLVRKLPPICNG) is a signal peptide. Topologically, residues 49–102 (LPTQREDGNPCDFDWREVEILMFLSAIVMMKNRRSITVEQHVGNIFMFSKVANA) are extracellular. A helical transmembrane segment spans residues 103 to 125 (ILFFRLDIRMGLLYLTLCIVFLM). Residues 114 to 269 (LLYLTLCIVF…LYQRAKKLSK (156 aa)) enclose the Thioredoxin domain. Over 126–295 (TCKPPLYMGP…VPDGENKKDK (170 aa)) the chain is Cytoplasmic. Ser-211 and Ser-243 each carry phosphoserine. The segment at 266-295 (KLSKGGDMSEEKPGNPTPTAVPDGENKKDK) is disordered. Positions 292–295 (KKDK) match the Di-lysine motif motif.

As to quaternary structure, monomer. Homodimer; disulfide-linked. Occurs in both reduced and oxidized monomeric form. Oxidative conditions increase homodimerization. Interacts with CANX. Interacts with ATP2A2.

It localises to the endoplasmic reticulum membrane. The protein resides in the mitochondrion membrane. Its function is as follows. Endoplasmic reticulum and mitochondria-associated protein that probably functions as a regulator of cellular redox state and thereby regulates protein post-translational modification, protein folding and mitochondrial activity. Indirectly regulates neuronal proliferation, migration, and organization in the developing brain. The polypeptide is Thioredoxin-related transmembrane protein 2 (Tmx2) (Rattus norvegicus (Rat)).